The following is a 179-amino-acid chain: Macro domain-containing protein XAC3343 (179 aa).

The Macro domain occupies 1–175 (MRIEVWQGDI…AYQQALATQE (175 aa)).

Belongs to the MacroD-type family.

The polypeptide is Macro domain-containing protein XAC3343 (Xanthomonas axonopodis pv. citri (strain 306)).